The chain runs to 212 residues: MDLPPLSLDQLSAVITAGPTPTDLYTSLSAYEEQACLLSATDPSEKDLLLEFYTAFFFSHLLTDQICEARALTRRIPREISRLDAMQTCSLLLRAVWQSKHTEIYKILRELPWPGRSQPLVQRYESYFQEKTLVEMSNSYETIRIAAAATYLGLDPAAVEGDIIEKFTACGWKWDSEKQLLHPKPVVTAPPKDDSLQNELSRVMALISNQGS.

A PCI domain is found at 26–193 (TSLSAYEEQA…KPVVTAPPKD (168 aa)).

This sequence belongs to the CSN8 family. In terms of assembly, component of the COP9 signalosome (CSN) complex.

The protein resides in the cytoplasm. Its subcellular location is the nucleus. Functionally, component of the COP9 signalosome (CSN) complex that acts as an regulator of the ubiquitin (Ubl) conjugation pathway by mediating the deneddylation of the cullin subunit of SCF-type E3 ubiquitin-protein ligase complexes. The CSN complex seems to link protein degradation to sexual development. This chain is COP9 signalosome complex subunit 8 (csnH), found in Emericella nidulans (strain FGSC A4 / ATCC 38163 / CBS 112.46 / NRRL 194 / M139) (Aspergillus nidulans).